The following is a 129-amino-acid chain: Azurin iso-2 (129 aa).

The region spanning 1–129 is the Plastocyanin-like domain; sequence ASCETTVTSG…MMRGTLKLEE (129 aa). Cys-3 and Cys-26 are oxidised to a cystine. Cu cation is bound by residues His-46, Cys-112, His-117, and Met-121.

Its subcellular location is the periplasm. In terms of biological role, this methylothroph organism uses azurin in the oxidation of methylamine. Iso-2 is probably the acceptor of electrons from methylamine dehydrogenase. This Methylomonas sp. (strain J) protein is Azurin iso-2.